The following is a 70-amino-acid chain: Metallothionein-like protein 1 (70 aa).

The protein belongs to the metallothionein superfamily. Type 15 family.

Functionally, metallothioneins have a high content of cysteine residues that bind various heavy metals. The sequence is that of Metallothionein-like protein 1 (MT1) from Festuca rubra (Red fescue).